A 285-amino-acid polypeptide reads, in one-letter code: Ribosomal RNA small subunit methyltransferase I (285 aa).

It belongs to the methyltransferase superfamily. RsmI family.

Its subcellular location is the cytoplasm. The enzyme catalyses cytidine(1402) in 16S rRNA + S-adenosyl-L-methionine = 2'-O-methylcytidine(1402) in 16S rRNA + S-adenosyl-L-homocysteine + H(+). Catalyzes the 2'-O-methylation of the ribose of cytidine 1402 (C1402) in 16S rRNA. The chain is Ribosomal RNA small subunit methyltransferase I from Mycobacterium tuberculosis (strain CDC 1551 / Oshkosh).